The sequence spans 187 residues: Avirulence protein ATR39-2 (187 aa).

The N-terminal stretch at 1–20 is a signal peptide; the sequence is MVKCTPLLALTVIVSAGSDA. Residues 49–66 carry the RxLR-dEER motif; the sequence is RVLRASDVPNEVAAGESR.

This sequence belongs to the RxLR effector family.

It localises to the secreted. It is found in the host cell. Its function is as follows. Secreted effector that acts as an elicitor of hypersensitive response (HR) specifically on plants carrying defense protein RPP39. The allele ATR39-1 is recognized by RPP39, whereas the ATR39-2 allele is nor recognized. The polypeptide is Avirulence protein ATR39-2 (Hyaloperonospora arabidopsidis (strain Emoy2) (Downy mildew agent)).